The sequence spans 110 residues: UPF0213 protein DVU_3309 (110 aa).

Residues 8-83 form the GIY-YIG domain; it reads EVWFVYLLRC…KRQPTDQKLA (76 aa).

Belongs to the UPF0213 family.

This is UPF0213 protein DVU_3309 from Nitratidesulfovibrio vulgaris (strain ATCC 29579 / DSM 644 / CCUG 34227 / NCIMB 8303 / VKM B-1760 / Hildenborough) (Desulfovibrio vulgaris).